The sequence spans 242 residues: Endoglucanase-5 (242 aa).

A signal peptide spans Met-1–Ala-17. A catalytic region spans residues Tyr-18–Asn-182. Asp-27 (nucleophile) is an active-site residue. The active-site Proton donor is the Asp-134. Positions Thr-177–Gln-206 are disordered. Asn-182 carries an N-linked (GlcNAc...) asparagine glycan. Residues Thr-184–Pro-201 are compositionally biased toward low complexity. The 37-residue stretch at Gly-205–Leu-241 folds into the CBM1 domain. 2 disulfides stabilise this stretch: Cys-213–Cys-230 and Cys-224–Cys-240.

The protein belongs to the glycosyl hydrolase 45 (cellulase K) family.

The catalysed reaction is Endohydrolysis of (1-&gt;4)-beta-D-glucosidic linkages in cellulose, lichenin and cereal beta-D-glucans.. This is Endoglucanase-5 (egl5) from Hypocrea jecorina (Trichoderma reesei).